The chain runs to 82 residues: Sec-independent protein translocase protein TatA (82 aa).

The helical transmembrane segment at 1 to 21 (MGGISIWQLLIIAVIIVLLFG) threads the bilayer. The tract at residues 48–82 (SAKDAKKDADFVPQNLEKKEAETVEKQKQNDKEQA) is disordered.

It belongs to the TatA/E family. In terms of assembly, the Tat system comprises two distinct complexes: a TatABC complex, containing multiple copies of TatA, TatB and TatC subunits, and a separate TatA complex, containing only TatA subunits. Substrates initially bind to the TatABC complex, which probably triggers association of the separate TatA complex to form the active translocon.

The protein localises to the cell inner membrane. In terms of biological role, part of the twin-arginine translocation (Tat) system that transports large folded proteins containing a characteristic twin-arginine motif in their signal peptide across membranes. TatA could form the protein-conducting channel of the Tat system. The protein is Sec-independent protein translocase protein TatA of Aliivibrio salmonicida (strain LFI1238) (Vibrio salmonicida (strain LFI1238)).